Consider the following 246-residue polypeptide: 5'-nucleotidase SurE (246 aa).

Asp8, Asp9, Ser39, and Asn91 together coordinate a divalent metal cation.

This sequence belongs to the SurE nucleotidase family. It depends on a divalent metal cation as a cofactor.

The protein resides in the cytoplasm. The enzyme catalyses a ribonucleoside 5'-phosphate + H2O = a ribonucleoside + phosphate. Nucleotidase that shows phosphatase activity on nucleoside 5'-monophosphates. The protein is 5'-nucleotidase SurE of Dechloromonas aromatica (strain RCB).